The sequence spans 62 residues: Photosystem II reaction center protein Z (62 aa).

A run of 2 helical transmembrane segments spans residues 8 to 28 (AVFA…VVFA) and 41 to 61 (FSGT…NSLI).

This sequence belongs to the PsbZ family. In terms of assembly, PSII is composed of 1 copy each of membrane proteins PsbA, PsbB, PsbC, PsbD, PsbE, PsbF, PsbH, PsbI, PsbJ, PsbK, PsbL, PsbM, PsbT, PsbY, PsbZ, Psb30/Ycf12, at least 3 peripheral proteins of the oxygen-evolving complex and a large number of cofactors. It forms dimeric complexes.

Its subcellular location is the plastid. The protein resides in the chloroplast thylakoid membrane. Its function is as follows. May control the interaction of photosystem II (PSII) cores with the light-harvesting antenna, regulates electron flow through the 2 photosystem reaction centers. PSII is a light-driven water plastoquinone oxidoreductase, using light energy to abstract electrons from H(2)O, generating a proton gradient subsequently used for ATP formation. The sequence is that of Photosystem II reaction center protein Z from Citrus sinensis (Sweet orange).